We begin with the raw amino-acid sequence, 141 residues long: Hemoglobin subunit alpha-1/2 (141 aa).

Positions 1 to 141 (VLSPADKTNV…VSTVLTSKYR (141 aa)) constitute a Globin domain. Ser-3 bears the Phosphoserine mark. Residue Lys-7 is modified to N6-succinyllysine. Thr-8 carries the post-translational modification Phosphothreonine. An N6-succinyllysine modification is found at Lys-11. Position 16 is an N6-acetyllysine; alternate (Lys-16). The residue at position 16 (Lys-16) is an N6-succinyllysine; alternate. At Tyr-24 the chain carries Phosphotyrosine. Ser-35 bears the Phosphoserine mark. Lys-40 carries the N6-succinyllysine modification. Ser-49 is modified (phosphoserine). His-58 lines the O2 pocket. His-87 is a heme b binding site. Ser-102 bears the Phosphoserine mark. A Phosphothreonine modification is found at Thr-108. Ser-124 is subject to Phosphoserine. Residues Thr-134 and Thr-137 each carry the phosphothreonine modification. A Phosphoserine modification is found at Ser-138.

This sequence belongs to the globin family. As to quaternary structure, heterotetramer of two alpha chains and two beta chains. Red blood cells.

Involved in oxygen transport from the lung to the various peripheral tissues. This is Hemoglobin subunit alpha-1/2 from Mustela lutreola (European mink).